The primary structure comprises 242 residues: MSGFFITATDTEVGKTVVAGAIAGVFRELGYNVGVYKPLQSGHVASNPEGDAARLKVLSGVPTQENEICPYSIEEPLAPRLAMKRAGRVVKLKEITDYYNELLKEFNSLFVEGAGGLAVPYTEDALVIDFAKELQLPLIVVARPTLGTVNHTVLTIAYAKAHGLTVAGVILSGCKECEMERVQENKEMIEELSGVPVLGLLPFFEGEFTKEEVLESAKEYIMISKLEEFIQNESNVAGAPSI.

12–17 (EVGKTV) contacts ATP. Thr16 contacts Mg(2+). Lys37 is a catalytic residue. Substrate is bound at residue Ser41. ATP contacts are provided by residues Asp51 and 112–115 (EGAG). Positions 51 and 112 each coordinate Mg(2+).

The protein belongs to the dethiobiotin synthetase family. Homodimer. The cofactor is Mg(2+).

It localises to the cytoplasm. The enzyme catalyses (7R,8S)-7,8-diammoniononanoate + CO2 + ATP = (4R,5S)-dethiobiotin + ADP + phosphate + 3 H(+). Its pathway is cofactor biosynthesis; biotin biosynthesis; biotin from 7,8-diaminononanoate: step 1/2. Functionally, catalyzes a mechanistically unusual reaction, the ATP-dependent insertion of CO2 between the N7 and N8 nitrogen atoms of 7,8-diaminopelargonic acid (DAPA, also called 7,8-diammoniononanoate) to form a ureido ring. The protein is ATP-dependent dethiobiotin synthetase BioD of Bacillus cereus (strain G9842).